Here is a 601-residue protein sequence, read N- to C-terminus: MSGPRSGSGSGGSTGRPGDADSQRSAYEKEVHELTTQVTFLEEEVAMLRRRLSESPRQVRVLEERLAQVQVELQTATGQNDKLVATLREARDQIISLKEEVDRLAQPPSGYGVFIRGYDDGTVDVFTQGRKLRVTVSPNVEADVLQPGQEVMLNEALNVVEVRAFERQGEIVLLKEVLESGDRALVIGHTDEERVVMLAQPLLDGPIRAGDSLLIEPRSGYAFERIPKSEVEELVLEEVPDIGYEQIGGLKGQIESIRDAVELPFLYKELFLEHKLKPPKGVLLYGPPGCGKTLIAKAVANSLAKKVEAQTGQGSGRAFFLNIKGPELLNKYVGETERQIRLVFQRAREKASEGMPVIVFFDEMDSIFRTRGSGVSSDVENTIVPQLLSEIDGVEQLENVIVIGASNREDMIDPAILRPGRLDVKIKVERPDAEAAKDIFAKYVLPELPLHADDLAEHGGNREATCQGMIQRVVERMYAESEENRFLEVTYANGDKEVLYFKDFNSGAMIENIVARAKKMAVKDLIESGVRGLRMQHLLSACLDEFKENEDLPNTTNPDDWARISGKKGERIVYIRTLVTGTKGTEAGRSIDTIANTGQYL.

Over residues 1-15 the composition is skewed to gly residues; it reads MSGPRSGSGSGGSTG. Positions 1 to 29 are disordered; it reads MSGPRSGSGSGGSTGRPGDADSQRSAYEK. Basic and acidic residues predominate over residues 18–29; that stretch reads GDADSQRSAYEK. Residues 19 to 106 are a coiled coil; the sequence is DADSQRSAYE…LKEEVDRLAQ (88 aa). 289-294 lines the ATP pocket; the sequence is GCGKTL. The segment at 600–601 is docks into pockets in the proteasome alpha-ring; that stretch reads YL.

Belongs to the AAA ATPase family. In terms of assembly, homohexamer. Assembles into a hexameric ring structure that caps the 20S proteasome core. Strongly interacts with the prokaryotic ubiquitin-like protein Pup through a hydrophobic interface; the interacting region of ARC lies in its N-terminal coiled-coil domain. There is one Pup binding site per ARC hexamer ring. Upon ATP-binding, the C-terminus of ARC interacts with the alpha-rings of the proteasome core, possibly by binding to the intersubunit pockets.

It participates in protein degradation; proteasomal Pup-dependent pathway. ATPase which is responsible for recognizing, binding, unfolding and translocation of pupylated proteins into the bacterial 20S proteasome core particle. May be essential for opening the gate of the 20S proteasome via an interaction with its C-terminus, thereby allowing substrate entry and access to the site of proteolysis. Thus, the C-termini of the proteasomal ATPase may function like a 'key in a lock' to induce gate opening and therefore regulate proteolysis. The chain is Proteasome-associated ATPase from Parafrankia sp. (strain EAN1pec).